A 2082-amino-acid polypeptide reads, in one-letter code: Probable ATP-dependent helicase PF08_0048 (2082 aa).

The HSA domain maps to 66 to 138 (KIVEPAKTPE…EEKRLKLYSK (73 aa)). Residues 209–221 (NNSEIVNNNASSV) are compositionally biased toward low complexity. Disordered stretches follow at residues 209–234 (NNSE…DDLT) and 301–470 (NVIE…SPTR). 2 stretches are compositionally biased toward basic and acidic residues: residues 419-448 (NSDH…HIDN) and 455-465 (TGEDYKSDKEN). Residues 476 to 531 (KKEKYDEYDTKLKIEKREEENKNYEKDEHEYESDNYDKEKINKKKELILLKNDIEN) are a coiled coil. Residues 532 to 641 (DSDETSEHIK…KNDSDDNDDI (110 aa)) form a disordered region. Residues 536–545 (TSEHIKRDSR) are compositionally biased toward basic and acidic residues. Low complexity predominate over residues 579-598 (DNNNSENDNNNDNNNDNNND). A compositionally biased stretch (acidic residues) spans 599–627 (NNDDNNDDNNDDNNDDNNDDNNDDNNDDN). The region spanning 674 to 839 (LYLYKNNING…WSLLHFLMPN (166 aa)) is the Helicase ATP-binding domain. 687–694 (DEMGLGKT) is a binding site for ATP. The DEAH box motif lies at 790–793 (DEAH). The disordered stretch occupies residues 1199-1255 (EQNNNNSKDNNNNIDNNNNIDNNNNIDNNNNIDNNNNIDNNNNNIDNNNNIDNHHNN). A Helicase C-terminal domain is found at 1772–1922 (ALEKLLSKCK…NICINMGNFN (151 aa)). A coiled-coil region spans residues 1972–2060 (EQVENKDKMN…DEMRMKIEIE (89 aa)).

It belongs to the SNF2/RAD54 helicase family. SWR1 subfamily. Component of a chromatin-remodeling complex.

The protein localises to the nucleus. Its function is as follows. Catalytic component of a chromatin remodeling complex. The chain is Probable ATP-dependent helicase PF08_0048 from Plasmodium falciparum (isolate 3D7).